The following is a 462-amino-acid chain: Elongation factor 1-alpha 1 (462 aa).

Position 2 is a n,N,N-trimethylglycine (glycine 2). Residues 5–242 (KTHINIVVIG…DCILPPTRPT (238 aa)) form the tr-type G domain. A G1 region spans residues 14–21 (GHVDSGKS). 14 to 21 (GHVDSGKS) is a GTP binding site. Lysine 36 carries the N6,N6,N6-trimethyllysine; alternate modification. An N6,N6-dimethyllysine; alternate modification is found at lysine 36. Lysine 36 is subject to N6-methyllysine; alternate. Residue lysine 55 is modified to N6,N6-dimethyllysine. The interval 70 to 74 (GITID) is G2. Residue lysine 79 is modified to N6,N6,N6-trimethyllysine; by EEF1AKMT1. The G3 stretch occupies residues 91–94 (DAPG). 153–156 (NKMD) is a GTP binding site. Residues 153 to 156 (NKMD) are G4. An N6,N6,N6-trimethyllysine; alternate; by EEF1AKMT3 modification is found at lysine 165. At lysine 165 the chain carries N6,N6-dimethyllysine; alternate; by EEF1AKMT3. Lysine 165 carries the N6-acetyllysine; alternate modification. The residue at position 165 (lysine 165) is an N6-methyllysine; alternate; by EEF1AKMT3. At lysine 172 the chain carries N6-acetyllysine. A GTP-binding site is contributed by 194–196 (SGW). The G5 stretch occupies residues 194-196 (SGW). N6-acetyllysine is present on lysine 273. Residue serine 300 is modified to Phosphoserine; by TGFBR1. Glutamate 301 is subject to 5-glutamyl glycerylphosphorylethanolamine. N6,N6,N6-trimethyllysine; by EEF1AKMT2 is present on lysine 318. At glutamate 374 the chain carries 5-glutamyl glycerylphosphorylethanolamine. Lysine 385 participates in a covalent cross-link: Glycyl lysine isopeptide (Lys-Gly) (interchain with G-Cter in ubiquitin). At lysine 392 the chain carries N6-acetyllysine; alternate. The residue at position 392 (lysine 392) is an N6-succinyllysine; alternate. A Phosphothreonine; by PASK modification is found at threonine 432. Lysine 439 carries the N6-acetyllysine modification.

This sequence belongs to the TRAFAC class translation factor GTPase superfamily. Classic translation factor GTPase family. EF-Tu/EF-1A subfamily. As to quaternary structure, found in a nuclear export complex with XPO5, EEF1A1, Ran and aminoacylated tRNA. Interacts with PARP1 and TXK. Interacts with KARS1. May interact with ERGIC2. Interacts with IFIT1 (via TPR repeats 4-7). Interacts with DLC1, facilitating distribution to the membrane periphery and ruffles upon growth factor stimulation. Interacts with ZPR1; the interaction occurs in a epidermal growth factor (EGF)-dependent manner. Interacts with PPP1R16B. Interacts with SPHK1 and SPHK2; both interactions increase SPHK1 and SPHK2 kinase activity. Interacts with guanyl-nucleotide exchange factor EEF1B2. Interacts (via middle-region) with HTATIP2 (via N-terminus); the interaction is direct and competes with EEF1A1 binding to guanyl-nucleotide exchange factor EEF1B2, thereby inhibiting GDP for GTP exchange and reactivation of EEF1A1. Interacts with tRNA. ISGylated. In terms of processing, phosphorylated by TXK. Phosphorylation by PASK increases translation efficiency. Phosphorylated by ROCK2. Phosphorylation by TGFBR1 inhibits translation elongation. Post-translationally, trimethylated at Lys-79 by EEF1AKMT1. Methylated at Lys-165 by EEF1AKMT3, methylation by EEF1AKMT3 is dynamic as well as inducible by stress conditions, such as ER-stress, and plays a regulatory role on mRNA translation. Trimethylated at Lys-318 by EEF1AKMT2. Mono-, di-, and trimethylated at Lys-36 by EEF1AKMT4; trimethylated form is predominant. Methylation by EEF1AKMT4 contributes to the fine-tuning of translation rates for a subset of tRNAs. Trimethylated at Gly-2 by METTL13. Mono- and dimethylated at Lys-55 by METTL13; dimethylated form is predominant. Ubiquitinated at Lys-385 by RNF14 in response to ribosome collisions (ribosome stalling), leading to its degradation by the proteasome and rescue of stalled ribosomes.

It is found in the cytoplasm. Its subcellular location is the nucleus. The protein resides in the nucleolus. It localises to the cell membrane. The catalysed reaction is GTP + H2O = GDP + phosphate + H(+). Its function is as follows. Translation elongation factor that catalyzes the GTP-dependent binding of aminoacyl-tRNA (aa-tRNA) to the A-site of ribosomes during the elongation phase of protein synthesis. Base pairing between the mRNA codon and the aa-tRNA anticodon promotes GTP hydrolysis, releasing the aa-tRNA from EEF1A1 and allowing its accommodation into the ribosome. The growing protein chain is subsequently transferred from the P-site peptidyl tRNA to the A-site aa-tRNA, extending it by one amino acid through ribosome-catalyzed peptide bond formation. Also plays a role in the positive regulation of IFNG transcription in T-helper 1 cells as part of an IFNG promoter-binding complex with TXK and PARP1. Also plays a role in cytoskeleton organization by promoting actin bundling. The chain is Elongation factor 1-alpha 1 (EEF1A1) from Bos taurus (Bovine).